The sequence spans 754 residues: Neprilysin-1 (754 aa).

The chain crosses the membrane as a helical; Signal-anchor for type II membrane protein span at residues 5–27 (FGPPIVFLISCYALILCGTVDAL). Asn38, Asn81, Asn132, Asn217, Asn273, Asn303, and Asn441 each carry an N-linked (GlcNAc...) asparagine glycan. The 692-residue stretch at 63 to 754 (VGDSEGYQEA…MNPTKRCVVW (692 aa)) folds into the Peptidase M13 domain. Disulfide bonds link Cys87–Cys739, Cys95–Cys699, Cys151–Cys414, and Cys624–Cys751. His587 lines the Zn(2+) pocket. Residue Glu588 is part of the active site. His591 provides a ligand contact to Zn(2+). N-linked (GlcNAc...) asparagine glycosylation is present at Asn612. Glu649 is a binding site for Zn(2+). Asp653 (proton donor) is an active-site residue.

This sequence belongs to the peptidase M13 family. Requires Zn(2+) as cofactor. In terms of tissue distribution, specifically expressed in pharyngeal cells and a single head neuron.

Its subcellular location is the membrane. In terms of biological role, probable cell surface protease. Required to control the neuronal innervation of pharyngeal pumping. This chain is Neprilysin-1 (nep-1), found in Caenorhabditis elegans.